Reading from the N-terminus, the 385-residue chain is Isocitrate dehydrogenase [NAD] subunit beta, mitochondrial (385 aa).

A mitochondrion-targeting transit peptide spans 1–34 (MAALSGVRWLTRALVSAGNPGAWRGLSTSAAAHA). At K199 the chain carries N6-acetyllysine.

It belongs to the isocitrate and isopropylmalate dehydrogenases family. As to quaternary structure, heterooligomer of subunits alpha (IDH3A), beta (IDH3B), and gamma (IDH3G) in the apparent ratio of 2:1:1. The heterodimer containing one IDH3A and one IDH3B subunit and the heterodimer containing one IDH3A and one IDH3G subunit assemble into a heterotetramer (which contains two subunits of IDH3A, one of IDH3B and one of IDH3G) and further into the heterooctamer.

It is found in the mitochondrion. With respect to regulation, the heterotetramer and the heterodimer composed of IDH3A and IDH3G subunits can be allosterically activated by citrate (CIT) or/and ADP, and the two activators can act independently or synergistically. The heterodimer composed of IDH3A and IDH3B subunits cannot be allosterically regulated and the allosteric regulation of the heterotetramer is through the IDH3G subunit and not the IDH3B subunit. The IDH3G subunit contains the allosteric site which consists of a CIT-binding site and an ADP-binding site, and the binding of CIT and ADP causes conformational changes at the allosteric site which are transmitted to the active site in the catalytic subunit (IDH3A) through a cascade of conformational changes at the heterodimer interface, leading to stabilization of the isocitrate-binding at the active site and thus activation of the enzyme. ATP can activate the heterotetramer and the heterodimer composed of IDH3A and IDH3G subunits at low concentrations but inhibits their activities at high concentrations, whereas ATP exhibits only inhibitory effect on the heterodimer composed of IDH3A and IDH3B subunits. In terms of biological role, plays a structural role to facilitate the assembly and ensure the full activity of the enzyme catalyzing the decarboxylation of isocitrate (ICT) into alpha-ketoglutarate. The heterodimer composed of the alpha (IDH3A) and beta (IDH3B) subunits and the heterodimer composed of the alpha (IDH3A) and gamma (IDH3G) subunits, have considerable basal activity but the full activity of the heterotetramer (containing two subunits of IDH3A, one of IDH3B and one of IDH3G) requires the assembly and cooperative function of both heterodimers. In Macaca fascicularis (Crab-eating macaque), this protein is Isocitrate dehydrogenase [NAD] subunit beta, mitochondrial (IDH3B).